The primary structure comprises 141 residues: Methane monooxygenase regulatory protein B (141 aa).

The protein belongs to the TmoD/XamoD family. The soluble methane monooxygenase (sMMO) consists of four components A/MMOH (composed of alpha/MmoX, beta/MmoY and gamma/MmoZ), B/MMOB (MmoB), C/MMOR (MmoC) and D/MMOD (MmoD).

In terms of biological role, the B protein acts as a regulator of electron flow through the soluble mmo complex, switching the enzyme from an oxidase to a hydroxylase in the presence of the substrate. In Methylococcus capsulatus (strain ATCC 33009 / NCIMB 11132 / Bath), this protein is Methane monooxygenase regulatory protein B (mmoB).